The sequence spans 880 residues: DNA mismatch repair protein MutS (880 aa).

635-642 (GPNMGGKS) lines the ATP pocket.

It belongs to the DNA mismatch repair MutS family.

In terms of biological role, this protein is involved in the repair of mismatches in DNA. It is possible that it carries out the mismatch recognition step. This protein has a weak ATPase activity. This is DNA mismatch repair protein MutS from Nitrosomonas eutropha (strain DSM 101675 / C91 / Nm57).